The sequence spans 184 residues: uncharacterized protein (184 aa).

The N-terminal stretch at 1–20 (MYQLEKIWVLLCLALVGVLG) is a signal peptide.

This is an uncharacterized protein from Drosophila melanogaster (Fruit fly).